Reading from the N-terminus, the 544-residue chain is NXPE family member 4 (544 aa).

The signal sequence occupies residues 1 to 27; sequence MKISMINYKSLLALLFILASWIIFTVF. N-linked (GlcNAc...) asparagine glycosylation is found at Asn-29, Asn-38, Asn-47, Asn-48, Asn-92, Asn-160, and Asn-210.

It belongs to the NXPE family.

The protein localises to the secreted. The sequence is that of NXPE family member 4 (NXPE4) from Homo sapiens (Human).